A 586-amino-acid polypeptide reads, in one-letter code: Nucleus accumbens-associated protein 2 (586 aa).

In terms of domain architecture, BTB spans 30–94; it reads CDVSIVVKGQ…CYTGKLTMAA (65 aa). A Glycyl lysine isopeptide (Lys-Gly) (interchain with G-Cter in SUMO2) cross-link involves residue K171. The disordered stretch occupies residues 177–196; sequence MPPASGPGLASKRPLETGPR. K215 is covalently cross-linked (Glycyl lysine isopeptide (Lys-Gly) (interchain with G-Cter in SUMO2)). Positions 236 to 272 are disordered; sequence QVPYPPGERTSPGASSLPTTDSPTSYHNEEDEEDDEA. Polar residues predominate over residues 247–261; the sequence is PGASSLPTTDSPTSY. Residues K297, K427, and K454 each participate in a glycyl lysine isopeptide (Lys-Gly) (interchain with G-Cter in SUMO2) cross-link. The BEN domain occupies 349 to 446; the sequence is GSGVYITRGQ…DMCTNARRVR (98 aa). The segment at 542–586 is disordered; sequence APEQLPADGQSSPQAFEQGNTSSSRPQTPVATATRRPEGTYAGTL. Residues 550 to 572 are compositionally biased toward polar residues; it reads GQSSPQAFEQGNTSSSRPQTPVA.

As to quaternary structure, homooligomer; mediated by the BTB domain. Interacts with the NuRD complex. Interacts (via C-terminal part) with HDAC2. Interacts (via BTB domain) with MTA1, MTA2 and MTA3.

It is found in the nucleus. Its function is as follows. Functions as a transcriptional repressor through its association with the NuRD complex. Recruits the NuRD complex to the promoter of MDM2, leading to the repression of MDM2 transcription and subsequent stability of p53/TP53. This is Nucleus accumbens-associated protein 2 (Nacc2) from Mus musculus (Mouse).